A 313-amino-acid chain; its full sequence is Ribosomal RNA small subunit methyltransferase H (313 aa).

Residues glycine 35–histidine 37, aspartate 55, phenylalanine 80, aspartate 102, and glutamine 109 each bind S-adenosyl-L-methionine.

This sequence belongs to the methyltransferase superfamily. RsmH family.

It is found in the cytoplasm. It carries out the reaction cytidine(1402) in 16S rRNA + S-adenosyl-L-methionine = N(4)-methylcytidine(1402) in 16S rRNA + S-adenosyl-L-homocysteine + H(+). Its function is as follows. Specifically methylates the N4 position of cytidine in position 1402 (C1402) of 16S rRNA. This chain is Ribosomal RNA small subunit methyltransferase H, found in Shewanella sp. (strain MR-7).